The chain runs to 67 residues: Large ribosomal subunit protein uL29 (67 aa).

This sequence belongs to the universal ribosomal protein uL29 family.

This is Large ribosomal subunit protein uL29 from Wolbachia pipientis wMel.